Here is a 144-residue protein sequence, read N- to C-terminus: Virulence protein STM3117 (144 aa).

Residues 23 to 143 form the VOC domain; sequence RIDHLVLTVS…DGNLIEISQY (121 aa).

Is critically involved in promoting the replication of S.typhimurium cells inside host macrophages, suggesting a role in the establishment of bacterial colonization within macrophages. May be involved in the biosynthesis and modification of the peptidoglycan layer of the cell wall. The sequence is that of Virulence protein STM3117 from Salmonella typhimurium (strain LT2 / SGSC1412 / ATCC 700720).